We begin with the raw amino-acid sequence, 708 residues long: MQAIIKEFQLGQHTVTLETGAIARQADGAVLASIGDTSVLVTVVGKREAQPGQDFFPLTVNYQERMYAAGRIPGGFLKREGRPNDGETLIARLIDRPIRPLFPSGFVNEVQVIATVVSVNPEIQPDMVALIGTSAALAISGIPFSGPIGATRVGYIDGEYVLNPTLKELEESKLDLVVAGTDNAVLMVESEADVLAEDIMLGAVVYGHEQAQAIITAIKEFKAEAGKPTWDWTAPAKNVSLEEKVASIAADKVGEAYRITDKVARKEALGVAKDEVVAVLTSELAEGESLDKQEIGKIFGSLEKKIVRGRIAAGEKRIDGREPDMIRALDVMTGVLPRTHGSAIFTRGETQALVTATLGTERDSQLIDDLTGTHKNHFMLNYNFPPFCVGETGFVGSPKRREIGHGNLAKRGIAAVMPTLTEFPYSIRVVSEITESNGSSSMASVCGTSLALMNAGVPIKASVAGIAMGLVKEDDKFVVLSDILGDEDHLGDMDFKVAGTAGGITALQMDIKIEGITQEIMQIALKQAKAARLHILEVMDKAISAPSEELSQFAPRIYTMKIPQKKIAEVIGKGGATIRQLTEETGTTIEIGDDGTIKIAATDGESAANAISRIEQLTAELEVGTIYEGKVVRIVDFGAFVNILPGKDGLVHISQISTERVNNVTDHLSEGQEVKVKVLEVDRQGRVRLSIKEAMESAAPAADAPTDA.

Residues aspartate 488 and aspartate 494 each coordinate Mg(2+). A KH domain is found at 555–614 (PRIYTMKIPQKKIAEVIGKGGATIRQLTEETGTTIEIGDDGTIKIAATDGESAANAISRI). In terms of domain architecture, S1 motif spans 624–692 (GTIYEGKVVR…RQGRVRLSIK (69 aa)).

Belongs to the polyribonucleotide nucleotidyltransferase family. Component of the RNA degradosome, which is a multiprotein complex involved in RNA processing and mRNA degradation. It depends on Mg(2+) as a cofactor.

The protein localises to the cytoplasm. The enzyme catalyses RNA(n+1) + phosphate = RNA(n) + a ribonucleoside 5'-diphosphate. Involved in mRNA degradation. Catalyzes the phosphorolysis of single-stranded polyribonucleotides processively in the 3'- to 5'-direction. The polypeptide is Polyribonucleotide nucleotidyltransferase (Pseudoalteromonas translucida (strain TAC 125)).